A 396-amino-acid polypeptide reads, in one-letter code: Purine ribonucleoside efflux pump NepI (396 aa).

Residues 1-21 (MSEFIAENRGADAITRPNWSA) are Cytoplasmic-facing. The helical transmembrane segment at 22 to 42 (VFSVAFCVACLIIVEFLPVSL) threads the bilayer. The Periplasmic portion of the chain corresponds to 43 to 54 (LTPMAQDLGISE). Residues 55-75 (GVAGQSVTVTAFVAMFASLFI) traverse the membrane as a helical segment. At 76 to 85 (TQTIQATDRR) the chain is on the cytoplasmic side. The chain crosses the membrane as a helical span at residues 86–106 (YVVILFAVLLTLSCLLVSFAN). Serine 107 is a topological domain (periplasmic). Residues 108–128 (FSLLLIGRACLGLALGGFWAM) form a helical membrane-spanning segment. At 129 to 147 (SASLTMRLVPPRTVPKALS) the chain is on the cytoplasmic side. The helical transmembrane segment at 148 to 168 (VIFGAVSIALVIAAPLGSFLG) threads the bilayer. Residues 169–175 (ELIGWRN) lie on the Periplasmic side of the membrane. A helical membrane pass occupies residues 176–196 (VFNAAAVMGVLCIFWIIKSLP). Over 197 to 215 (SLPGEPSHQKQNTFRLLQR) the chain is Cytoplasmic. A helical transmembrane segment spans residues 216-236 (PGVMAGMIAIFMSFAGQFAFF). At 237–255 (TYIRPVYMNLAGFGVDGLT) the chain is on the periplasmic side. A helical transmembrane segment spans residues 256 to 276 (LVLLSFGIASFIGTSLSSFIL). At 277-281 (KRSVK) the chain is on the cytoplasmic side. A helical transmembrane segment spans residues 282–302 (LALAGAPLILAVSALVLTLWG). At 303–305 (SDK) the chain is on the periplasmic side. A helical transmembrane segment spans residues 306-326 (IVATGVAIIWGLTFALVPVGW). The Cytoplasmic portion of the chain corresponds to 327–343 (STWITRSLADQAEKAGS). The chain crosses the membrane as a helical span at residues 344-364 (IQVAVIQLANTCGAAIGGYAL). The Periplasmic segment spans residues 365–366 (DN). Residues 367–387 (IGLTSPLMLSGTLMLLTALLV) traverse the membrane as a helical segment. Over 388–396 (TAKVKMKKS) the chain is Cytoplasmic.

It belongs to the major facilitator superfamily. DHA1 family. NepI (TC 2.A.1.2.26) subfamily.

Its subcellular location is the cell inner membrane. It catalyses the reaction inosine(in) + H(+)(out) = inosine(out) + H(+)(in). It carries out the reaction guanosine(in) + H(+)(out) = guanosine(out) + H(+)(in). Involved in the efflux of purine ribonucleosides, such as inosine and guanosine. In Shigella flexneri, this protein is Purine ribonucleoside efflux pump NepI.